Reading from the N-terminus, the 612-residue chain is Dihydroxy-acid dehydratase (612 aa).

Asp81 contributes to the Mg(2+) binding site. Position 122 (Cys122) interacts with [2Fe-2S] cluster. The Mg(2+) site is built by Asp123 and Lys124. Lys124 bears the N6-carboxylysine mark. Cys195 provides a ligand contact to [2Fe-2S] cluster. Mg(2+) is bound at residue Glu491. The active-site Proton acceptor is Ser517.

It belongs to the IlvD/Edd family. Homodimer. It depends on [2Fe-2S] cluster as a cofactor. Requires Mg(2+) as cofactor.

It catalyses the reaction (2R)-2,3-dihydroxy-3-methylbutanoate = 3-methyl-2-oxobutanoate + H2O. The enzyme catalyses (2R,3R)-2,3-dihydroxy-3-methylpentanoate = (S)-3-methyl-2-oxopentanoate + H2O. It participates in amino-acid biosynthesis; L-isoleucine biosynthesis; L-isoleucine from 2-oxobutanoate: step 3/4. It functions in the pathway amino-acid biosynthesis; L-valine biosynthesis; L-valine from pyruvate: step 3/4. In terms of biological role, functions in the biosynthesis of branched-chain amino acids. Catalyzes the dehydration of (2R,3R)-2,3-dihydroxy-3-methylpentanoate (2,3-dihydroxy-3-methylvalerate) into 2-oxo-3-methylpentanoate (2-oxo-3-methylvalerate) and of (2R)-2,3-dihydroxy-3-methylbutanoate (2,3-dihydroxyisovalerate) into 2-oxo-3-methylbutanoate (2-oxoisovalerate), the penultimate precursor to L-isoleucine and L-valine, respectively. In Rhizobium rhizogenes (strain K84 / ATCC BAA-868) (Agrobacterium radiobacter), this protein is Dihydroxy-acid dehydratase.